The primary structure comprises 773 residues: 4'-phosphopantetheine phosphatase (773 aa).

An N-acetylalanine modification is found at alanine 2. The interval 2–402 is pantothenate kinase; it reads AECGASGSGS…SPELGPAQRA (401 aa). 2 residues coordinate acetyl-CoA: serine 196 and serine 199. Tyrosine 320 carries the post-translational modification 3'-nitrotyrosine. A phosphoserine mark is found at serine 393 and serine 404. Residues 403–773 are 4'-phosphopantetheine phosphatase; the sequence is RSGTFDLLEM…VIFKYEVPAE (371 aa). Residue threonine 406 is modified to Phosphothreonine. Residues aspartate 623, asparagine 624, and aspartate 659 each contribute to the Mn(2+) site. Positions 724 to 728 match the Subfamily II EGMGR motif motif; sequence EGMGR.

This sequence in the N-terminal section; belongs to the type II pantothenate kinase family. In the C-terminal section; belongs to the damage-control phosphatase family. Phosphopantetheine phosphatase II subfamily. Homodimer. Interacts with PKM. Mn(2+) is required as a cofactor. Ni(2+) serves as cofactor. In terms of tissue distribution, widely expressed with high expression in the muscle. Expressed in the retina and lens epithelium, mainly in ganglion cell layer, outer plexiform layer and retinal pigment layer (at protein level).

The protein localises to the cytoplasm. The catalysed reaction is (R)-4'-phosphopantetheine + H2O = (R)-pantetheine + phosphate. It carries out the reaction (R)-4'-phosphopantetheine sulfonate + H2O = (R)-pantetheine sulfonate + phosphate. It catalyses the reaction (R)-4'-phospho-S-sulfopantetheine + H2O = (R)-S-sulfopantetheine + phosphate. Activity is strongly promoted by Co(2+), Ni(2+), Mg(2+) and Mn(2+). Activity is inhibited by EDTA. Its function is as follows. Phosphatase which shows a preference for 4'-phosphopantetheine and its oxidatively damaged forms (sulfonate or S-sulfonate), providing strong indirect evidence that the phosphatase activity pre-empts damage in the coenzyme A (CoA) pathway. Hydrolyzing excess 4'-phosphopantetheine could constitute a directed overflow mechanism to prevent its oxidation to the S-sulfonate, sulfonate, or other forms. Hydrolyzing 4'-phosphopantetheine sulfonate or S-sulfonate would forestall their conversion to inactive forms of CoA and acyl carrier protein. May play a role in the physiological regulation of CoA intracellular levels. This is 4'-phosphopantetheine phosphatase from Homo sapiens (Human).